The primary structure comprises 1172 residues: MMPRNNLEASTCKMAEPFNFEKKESKPPPQDPLRSPVAQHNHPTFRLKSPENGNTKNNFLLCEQNKQYLASQEDSSVVSSNPAVVNGEVGGSKGDRKPPPTGNPVSPLSLGNSSPPNQVKTKPSSNVTPEKSKKSHKLFENALSVNNPALFNSLGPPLRSTTCHRCGLFGSLRCSQCKQTYYCSTACQRRDWSSHSTICRPVQQSLNKLEDNKSPFETKAIEVKSEVDCPPGVTKEITAGAERVMFSDLRSLQLKKTMEIKGTVTEFKHPSNFYIQLYSSEVLENMNQLSTSLKETYANVVPEDGYLPVKGEVCVAKYTVDQTWNRAIVQAVDVLQRKAHVLYIDYGNEEMIPIDSVHPLSRGLDLFPPSAIKCCVSGVIPTAGEWSEGCVAAVKALLFEQFCSVKVMDILEEEVLTCAVDLVLQSSGKQLDHVLVEMGYGVKPGEQSSTEQSVDHSALEDVGRVTVESKIVTDRNALIPKVLTLNVGDEFCGVVAHIQTPEDFFCQQLQSGHKLAELQESLSEYCGHVIPRSDFYPTIGDVCCAQFSEDDQWYRASVLAYASEESVLVGYVDYGNFEILSLKRLCPIIPKLLDLPMQALNCVLAGVKPSLGIWTPEAVCVMKEMVQNRMVTVRVVGMLGTRALVELIDKSVAPHVSASKALIDSGFAIKEKDVADKGSSMHTASVPLAIEGPAEALEWTWVEFTVDETVDVVVCMMYSPGEFYCHFLKDDALEKLDDLNQSLADYCAQKPPNGFKAEIGRPCCAFFSGDGNWYRALVKEILPSGNVKVHFVDYGNVEEVTTDQLQAILPQFLLLPFQGMQCWLVDIQPPNKHWTKEATARFQACVVGLKLQARVVEITANGVGVELTDLSTPYPKIISDVLIREQLVLRCGSPQDSLMSRPANQHKQIDSHRVQASPSAEQWKTMELPVNKTIAANVLEIISPALFYAIPSEMSENQEKLCVLAAELLEHCNAQKGQPAYRPRTGDACCAKYTNDDFWYRAIVLETSESDVKVLYADYGNIETLPLSRVQPIPASHLELPFQIIRCSLEGPMELNGSCSQLVMELLRNAMLNQSVVLSVKAISKNVHAVSVEKCSENGMINIAENLVMCGLAENLTSKRKSASTKEIPHSRDCCCTELQKQIEKHEQILLFLLNNPTNQSKFTEMKKLLRS.

Disordered regions lie at residues 1 to 59 (MMPR…KNNF) and 72 to 136 (QEDS…KKSH). 2 stretches are compositionally biased toward low complexity: residues 75 to 86 (SSVVSSNPAVVN) and 103 to 117 (NPVS…SPPN). Over residues 118–129 (QVKTKPSSNVTP) the composition is skewed to polar residues. Zn(2+) is bound by residues Cys-163, Cys-166, Cys-174, Cys-177, Cys-183, Cys-187, His-195, and Cys-199. The MYND-type zinc finger occupies 163–199 (CHRCGLFGSLRCSQCKQTYYCSTACQRRDWSSHSTIC). Tudor domains lie at 307–367 (LPVK…LDLF), 536–595 (YPTI…LLDL), 756–815 (KAEI…FLLL), and 982–1040 (RPRT…HLEL).

This sequence belongs to the TDRD1 family. As to quaternary structure, found in a mRNP complex, at least composed of TDRD1, TDRD6, TDRD7 and DDX4. Interacts with MAEL. Interacts with PIWIL1, PIWIL2 and PIWIL4 (when methylated on arginine residues). Interacts with TDRD12. As to expression, testis and ovary specific. Present in germ-line cells and is most abundant in fetal prospermatogonia and postnatal primary spermatocytes (at protein level).

The protein resides in the cytoplasm. In terms of biological role, plays a central role during spermatogenesis by participating in the repression transposable elements and preventing their mobilization, which is essential for the germline integrity. Acts via the piRNA metabolic process, which mediates the repression of transposable elements during meiosis by forming complexes composed of piRNAs and Piwi proteins and governs the methylation and subsequent repression of transposons. Required for the localization of Piwi proteins to the meiotic nuage. Involved in the piRNA metabolic process by ensuring the entry of correct transcripts into the normal piRNA pool and limiting the entry of cellular transcripts into the piRNA pathway. May act by allowing the recruitment of piRNA biogenesis or loading factors that ensure the correct entry of transcripts and piRNAs into Piwi proteins. The chain is Tudor domain-containing protein 1 (Tdrd1) from Mus musculus (Mouse).